The chain runs to 32 residues: Photosystem II reaction center protein T (32 aa).

The helical transmembrane segment at 3–23 threads the bilayer; that stretch reads ALVYTFLLIGTLVVIFFAIFF.

It belongs to the PsbT family. In terms of assembly, PSII is composed of 1 copy each of membrane proteins PsbA, PsbB, PsbC, PsbD, PsbE, PsbF, PsbH, PsbI, PsbJ, PsbK, PsbL, PsbM, PsbT, PsbX, PsbY, PsbZ, Psb30/Ycf12, at least 3 peripheral proteins of the oxygen-evolving complex and a large number of cofactors. It forms dimeric complexes.

The protein resides in the plastid. The protein localises to the chloroplast thylakoid membrane. Found at the monomer-monomer interface of the photosystem II (PS II) dimer, plays a role in assembly and dimerization of PSII. PSII is a light-driven water plastoquinone oxidoreductase, using light energy to abstract electrons from H(2)O, generating a proton gradient subsequently used for ATP formation. The sequence is that of Photosystem II reaction center protein T from Emiliania huxleyi (Coccolithophore).